The sequence spans 209 residues: Ribosomal RNA large subunit methyltransferase E (209 aa).

Positions 63, 65, 83, 99, and 124 each coordinate S-adenosyl-L-methionine. The active-site Proton acceptor is lysine 164.

It belongs to the class I-like SAM-binding methyltransferase superfamily. RNA methyltransferase RlmE family.

The protein localises to the cytoplasm. The catalysed reaction is uridine(2552) in 23S rRNA + S-adenosyl-L-methionine = 2'-O-methyluridine(2552) in 23S rRNA + S-adenosyl-L-homocysteine + H(+). In terms of biological role, specifically methylates the uridine in position 2552 of 23S rRNA at the 2'-O position of the ribose in the fully assembled 50S ribosomal subunit. The polypeptide is Ribosomal RNA large subunit methyltransferase E (Pseudoalteromonas translucida (strain TAC 125)).